The following is a 773-amino-acid chain: ATP-dependent zinc metalloprotease YME1L1 (773 aa).

Over 1–295 the chain is Mitochondrial matrix; that stretch reads MFSLSSTVQP…TNDSLRRTRL (295 aa). The chain crosses the membrane as a helical span at residues 296–316; that stretch reads ILFVLLLFGIYGLLKNPFLSV. The Mitochondrial intermembrane portion of the chain corresponds to 317-773; the sequence is RFRTTTGLDS…VLEGKKLEVR (457 aa). V341, T383, G384, K385, T386, and L387 together coordinate ATP. A Zn(2+)-binding site is contributed by H599. The active site involves E600. H603 and D677 together coordinate Zn(2+).

In the N-terminal section; belongs to the AAA ATPase family. It in the C-terminal section; belongs to the peptidase M41 family. As to quaternary structure, homohexamer; may also form heterohexamers. Exists in several complexes of 600-1100 kDa. Interacts with AFG1L. It depends on Zn(2+) as a cofactor. Proteolytically processed by mitochondrial processing peptidase (MPP) to generate the mature form. Degraded in an OMA1-dependent manner in response to oxidative stress. High expression in cardiac and skeletal muscle mitochondria.

The protein resides in the mitochondrion inner membrane. Its subcellular location is the mitochondrion. It catalyses the reaction ATP + H2O = ADP + phosphate + H(+). Functionally, ATP-dependent metalloprotease that catalyzes the degradation of folded and unfolded proteins with a suitable degron sequence in the mitochondrial intermembrane region. Plays an important role in regulating mitochondrial morphology and function by cleaving OPA1 at position S2, giving rise to a form of OPA1 that promotes maintenance of normal mitochondrial structure and mitochondrial protein metabolism. Ensures cell proliferation, maintains normal cristae morphology and complex I respiration activity, promotes antiapoptotic activity and protects mitochondria from the accumulation of oxidatively damaged membrane proteins. Required to control the accumulation of nonassembled respiratory chain subunits (NDUFB6, OX4 and ND1). Involved in the mitochondrial adaptation in response to various signals, such as stress or developmental cues, by mediating degradation of mitochondrial proteins to rewire the mitochondrial proteome. Catalyzes degradation of mitochondrial proteins, such as translocases, lipid transfer proteins and metabolic enzymes in response to nutrient starvation in order to limit mitochondrial biogenesis: mechanistically, YME1L is activated by decreased phosphatidylethanolamine levels caused by LPIN1 activity in response to mTORC1 inhibition. Acts as a regulator of adult neural stem cell self-renewal by promoting mitochondrial proteome rewiring, preserving neural stem and progenitor cells self-renewal. Required for normal, constitutive degradation of PRELID1. Catalyzes the degradation of OMA1 in response to membrane depolarization. Mediates degradation of TIMM17A downstream of the integrated stress response (ISR). Catalyzes degradation of MICU1 when MICU1 is not assembled via an interchain disulfide. The sequence is that of ATP-dependent zinc metalloprotease YME1L1 (YME1L1) from Homo sapiens (Human).